Reading from the N-terminus, the 370-residue chain is Histidinol-phosphate aminotransferase (370 aa).

Lysine 229 carries the N6-(pyridoxal phosphate)lysine modification.

The protein belongs to the class-II pyridoxal-phosphate-dependent aminotransferase family. Histidinol-phosphate aminotransferase subfamily. In terms of assembly, homodimer. Requires pyridoxal 5'-phosphate as cofactor.

It carries out the reaction L-histidinol phosphate + 2-oxoglutarate = 3-(imidazol-4-yl)-2-oxopropyl phosphate + L-glutamate. It participates in amino-acid biosynthesis; L-histidine biosynthesis; L-histidine from 5-phospho-alpha-D-ribose 1-diphosphate: step 7/9. The sequence is that of Histidinol-phosphate aminotransferase from Helicobacter hepaticus (strain ATCC 51449 / 3B1).